The sequence spans 464 residues: tRNA modification GTPase MnmE (464 aa).

(6S)-5-formyl-5,6,7,8-tetrahydrofolate contacts are provided by Arg-26, Glu-92, and Arg-131. The region spanning 227-385 is the TrmE-type G domain; sequence GIKVAILGRV…LISALKDYVS (159 aa). Asn-237 is a K(+) binding site. Residues 237 to 242, 256 to 262, and 281 to 284 contribute to the GTP site; these read NAGKSS, SNIAGTT, and DTAG. Residue Ser-241 coordinates Mg(2+). Positions 256, 258, and 261 each coordinate K(+). Residue Thr-262 participates in Mg(2+) binding. Residue Lys-464 coordinates (6S)-5-formyl-5,6,7,8-tetrahydrofolate.

This sequence belongs to the TRAFAC class TrmE-Era-EngA-EngB-Septin-like GTPase superfamily. TrmE GTPase family. In terms of assembly, homodimer. Heterotetramer of two MnmE and two MnmG subunits. It depends on K(+) as a cofactor.

The protein resides in the cytoplasm. Functionally, exhibits a very high intrinsic GTPase hydrolysis rate. Involved in the addition of a carboxymethylaminomethyl (cmnm) group at the wobble position (U34) of certain tRNAs, forming tRNA-cmnm(5)s(2)U34. The protein is tRNA modification GTPase MnmE of Brachyspira hyodysenteriae (strain ATCC 49526 / WA1).